The following is a 154-amino-acid chain: Major allergen Api g 1, isoallergen 1 (154 aa).

The protein belongs to the BetVI family.

The polypeptide is Major allergen Api g 1, isoallergen 1 (Apium graveolens (Celery)).